The primary structure comprises 141 residues: Ribonuclease P protein component (141 aa).

Positions 114–134 (RRIKAKGERRGDGKRRTERPE) are enriched in basic and acidic residues. The tract at residues 114-141 (RRIKAKGERRGDGKRRTERPESGPVNGK) is disordered.

The protein belongs to the RnpA family. As to quaternary structure, consists of a catalytic RNA component (M1 or rnpB) and a protein subunit.

The catalysed reaction is Endonucleolytic cleavage of RNA, removing 5'-extranucleotides from tRNA precursor.. In terms of biological role, RNaseP catalyzes the removal of the 5'-leader sequence from pre-tRNA to produce the mature 5'-terminus. It can also cleave other RNA substrates such as 4.5S RNA. The protein component plays an auxiliary but essential role in vivo by binding to the 5'-leader sequence and broadening the substrate specificity of the ribozyme. The chain is Ribonuclease P protein component from Brucella anthropi (strain ATCC 49188 / DSM 6882 / CCUG 24695 / JCM 21032 / LMG 3331 / NBRC 15819 / NCTC 12168 / Alc 37) (Ochrobactrum anthropi).